The following is a 213-amino-acid chain: Orotate phosphoribosyltransferase (213 aa).

Lys26 lines the 5-phospho-alpha-D-ribose 1-diphosphate pocket. 34–35 (FF) is an orotate binding site. Residues 72 to 73 (YK), Arg99, Lys100, Lys103, His105, and 124 to 132 (DDVITAGTA) each bind 5-phospho-alpha-D-ribose 1-diphosphate. The orotate site is built by Thr128 and Arg156.

The protein belongs to the purine/pyrimidine phosphoribosyltransferase family. PyrE subfamily. Homodimer. Requires Mg(2+) as cofactor.

It carries out the reaction orotidine 5'-phosphate + diphosphate = orotate + 5-phospho-alpha-D-ribose 1-diphosphate. The protein operates within pyrimidine metabolism; UMP biosynthesis via de novo pathway; UMP from orotate: step 1/2. In terms of biological role, catalyzes the transfer of a ribosyl phosphate group from 5-phosphoribose 1-diphosphate to orotate, leading to the formation of orotidine monophosphate (OMP). In Escherichia coli O139:H28 (strain E24377A / ETEC), this protein is Orotate phosphoribosyltransferase.